We begin with the raw amino-acid sequence, 1756 residues long: Nucleoporin NUP192 (1756 aa).

The protein belongs to the NUP186/NUP192/NUP205 family. Component of the nuclear pore complex (NPC). NPC constitutes the exclusive means of nucleocytoplasmic transport. NPCs allow the passive diffusion of ions and small molecules and the active, nuclear transport receptor-mediated bidirectional transport of macromolecules such as proteins, RNAs, ribonucleoparticles (RNPs), and ribosomal subunits across the nuclear envelope. Due to its 8-fold rotational symmetry, all subunits are present with 8 copies or multiples thereof. Part of a tetrameric NUP192-NUP170-NIC96-NUP53 module.

The protein resides in the nucleus. It localises to the nuclear pore complex. In terms of biological role, functions as a component of the nuclear pore complex (NPC). NPC components, collectively referred to as nucleoporins (NUPs), can play the role of both NPC structural components and of docking or interaction partners for transiently associated nuclear transport factors. NUP192 is located to the NPC core at the nuclear membrane and is essential for de novo assembly of NPCs. This chain is Nucleoporin NUP192 (NUP192), found in Chaetomium thermophilum (strain DSM 1495 / CBS 144.50 / IMI 039719) (Thermochaetoides thermophila).